We begin with the raw amino-acid sequence, 500 residues long: Lycopene beta cyclase, chloroplastic (500 aa).

Residues 1-81 constitute a chloroplast transit peptide; that stretch reads MDTLLKTPNK…ELPMYDPSKG (81 aa). An NAD(+)-binding site is contributed by 86-114; it reads LAVVGGGPAGLAVAQQVSEAGLSVVSIDP.

The protein belongs to the lycopene cyclase family.

Its subcellular location is the plastid. It is found in the chloroplast. It carries out the reaction a carotenoid psi-end group = a carotenoid beta-end derivative. The protein operates within carotenoid biosynthesis; beta-carotene biosynthesis. It participates in carotenoid biosynthesis; beta-zeacarotene biosynthesis. Its function is as follows. Catalyzes the double cyclization reaction which converts lycopene to beta-carotene and neurosporene to beta-zeacarotene. This Nicotiana tabacum (Common tobacco) protein is Lycopene beta cyclase, chloroplastic (LCY1).